The following is a 33-amino-acid chain: Pardaxin P-5 (33 aa).

It belongs to the pardaxin family. In terms of assembly, monomer. In aqueous solution exists as a tetramer.

It is found in the secreted. The protein localises to the target cell membrane. In terms of biological role, exhibits unusual shark repellent and surfactant properties. Forms voltage-dependent, ion-permeable channels in membranes. At high concentration causes cell membrane lysis. The sequence is that of Pardaxin P-5 from Pardachirus marmoratus (Finless sole).